Reading from the N-terminus, the 92-residue chain is DNA/RNA-binding protein Alba (92 aa).

Lys-11 bears the N6-acetyllysine mark.

The protein belongs to the histone-like Alba family. Acetylated. Acetylation at Lys-11 decreases DNA-binding affinity.

The protein resides in the cytoplasm. The protein localises to the chromosome. Binds double-stranded DNA tightly but without sequence specificity. Involved in DNA compaction. This Pyrobaculum islandicum (strain DSM 4184 / JCM 9189 / GEO3) protein is DNA/RNA-binding protein Alba.